A 244-amino-acid polypeptide reads, in one-letter code: L-xylulose reductase (244 aa).

The residue at position 1 (methionine 1) is an N-acetylmethionine. 11-39 (LVTGAGKGIGRSIVKALHAAGARVVAVSR) contacts NADP(+). Arginine 21 carries the omega-N-methylarginine modification. Serine 46 is modified (phosphoserine). Serine 136 contributes to the substrate binding site. Tyrosine 149 (proton acceptor) is an active-site residue. Residue lysine 153 is part of the active site.

The protein belongs to the short-chain dehydrogenases/reductases (SDR) family. As to quaternary structure, homotetramer.

The protein localises to the membrane. It catalyses the reaction xylitol + NADP(+) = L-xylulose + NADPH + H(+). Catalyzes the NADPH-dependent reduction of several pentoses, tetroses, trioses, alpha-dicarbonyl compounds and L-xylulose. Participates in the uronate cycle of glucose metabolism. May play a role in the water absorption and cellular osmoregulation in the proximal renal tubules by producing xylitol, an osmolyte, thereby preventing osmolytic stress from occurring in the renal tubules. The sequence is that of L-xylulose reductase (DCXR) from Bos taurus (Bovine).